The sequence spans 191 residues: Transcription factor E (191 aa).

One can recognise an HTH TFE/IIEalpha-type domain in the interval 4–87; that stretch reads RNKELLEIGR…YWHIETKRLP (84 aa). Residues 170–191 form a disordered region; sequence APPKKEKKGKKSKKRSKKSKKK. The span at 174 to 191 shows a compositional bias: basic residues; sequence KEKKGKKSKKRSKKSKKK.

It belongs to the TFE family. As to quaternary structure, monomer. Interaction with RNA polymerase subunits RpoF and RpoE is necessary for Tfe stimulatory transcription activity. Able to interact with Tbp and RNA polymerase in the absence of DNA promoter. Interacts both with the preinitiation and elongation complexes.

Its function is as follows. Transcription factor that plays a role in the activation of archaeal genes transcribed by RNA polymerase. Facilitates transcription initiation by enhancing TATA-box recognition by TATA-box-binding protein (Tbp), and transcription factor B (Tfb) and RNA polymerase recruitment. Not absolutely required for transcription in vitro, but particularly important in cases where Tbp or Tfb function is not optimal. It dynamically alters the nucleic acid-binding properties of RNA polymerases by stabilizing the initiation complex and destabilizing elongation complexes. Seems to translocate with the RNA polymerase following initiation and acts by binding to the non template strand of the transcription bubble in elongation complexes. This chain is Transcription factor E, found in Pyrococcus horikoshii (strain ATCC 700860 / DSM 12428 / JCM 9974 / NBRC 100139 / OT-3).